We begin with the raw amino-acid sequence, 166 residues long: Protein-export protein SecB (166 aa).

This sequence belongs to the SecB family. As to quaternary structure, homotetramer, a dimer of dimers. One homotetramer interacts with 1 SecA dimer.

It is found in the cytoplasm. Its function is as follows. One of the proteins required for the normal export of preproteins out of the cell cytoplasm. It is a molecular chaperone that binds to a subset of precursor proteins, maintaining them in a translocation-competent state. It also specifically binds to its receptor SecA. The sequence is that of Protein-export protein SecB from Cereibacter sphaeroides (strain ATCC 17025 / ATH 2.4.3) (Rhodobacter sphaeroides).